The primary structure comprises 384 residues: Queuine tRNA-ribosyltransferase (384 aa).

Asp-93 serves as the catalytic Proton acceptor. Substrate-binding positions include 93 to 97 (DSGGF), Asp-147, Gln-202, and Gly-229. Residues 260–266 (GVGYPEE) form an RNA binding region. Asp-279 functions as the Nucleophile in the catalytic mechanism. The tract at residues 284-288 (TRAAR) is RNA binding; important for wobble base 34 recognition. Zn(2+) is bound by residues Cys-317, Cys-319, Cys-322, and His-348.

The protein belongs to the queuine tRNA-ribosyltransferase family. In terms of assembly, homodimer. Within each dimer, one monomer is responsible for RNA recognition and catalysis, while the other monomer binds to the replacement base PreQ1. It depends on Zn(2+) as a cofactor.

It catalyses the reaction 7-aminomethyl-7-carbaguanine + guanosine(34) in tRNA = 7-aminomethyl-7-carbaguanosine(34) in tRNA + guanine. The protein operates within tRNA modification; tRNA-queuosine biosynthesis. Catalyzes the base-exchange of a guanine (G) residue with the queuine precursor 7-aminomethyl-7-deazaguanine (PreQ1) at position 34 (anticodon wobble position) in tRNAs with GU(N) anticodons (tRNA-Asp, -Asn, -His and -Tyr). Catalysis occurs through a double-displacement mechanism. The nucleophile active site attacks the C1' of nucleotide 34 to detach the guanine base from the RNA, forming a covalent enzyme-RNA intermediate. The proton acceptor active site deprotonates the incoming PreQ1, allowing a nucleophilic attack on the C1' of the ribose to form the product. After dissociation, two additional enzymatic reactions on the tRNA convert PreQ1 to queuine (Q), resulting in the hypermodified nucleoside queuosine (7-(((4,5-cis-dihydroxy-2-cyclopenten-1-yl)amino)methyl)-7-deazaguanosine). In Koribacter versatilis (strain Ellin345), this protein is Queuine tRNA-ribosyltransferase.